Here is an 89-residue protein sequence, read N- to C-terminus: Translation initiation factor IF-1 1 (89 aa).

Residues 1-73 (MSNKEQLIEM…TKGRITFRHL (73 aa)) enclose the S1-like domain.

It belongs to the IF-1 family. As to quaternary structure, component of the 30S ribosomal translation pre-initiation complex which assembles on the 30S ribosome in the order IF-2 and IF-3, IF-1 and N-formylmethionyl-tRNA(fMet); mRNA recruitment can occur at any time during PIC assembly.

It is found in the cytoplasm. One of the essential components for the initiation of protein synthesis. Stabilizes the binding of IF-2 and IF-3 on the 30S subunit to which N-formylmethionyl-tRNA(fMet) subsequently binds. Helps modulate mRNA selection, yielding the 30S pre-initiation complex (PIC). Upon addition of the 50S ribosomal subunit IF-1, IF-2 and IF-3 are released leaving the mature 70S translation initiation complex. This is Translation initiation factor IF-1 1 from Acidovorax sp. (strain JS42).